Reading from the N-terminus, the 463-residue chain is Tryptophan aminotransferase-related protein 4 (463 aa).

The chain crosses the membrane as a helical span at residues 6 to 26 (LLLIVSIILNLVFTIHILYYS). Residues Y124, 163–164 (TT), N239, 259–262 (DYAY), 282–285 (SLSK), and R293 contribute to the pyridoxal 5'-phosphate site. At K285 the chain carries N6-(pyridoxal phosphate)lysine.

This sequence belongs to the alliinase family. It depends on pyridoxal 5'-phosphate as a cofactor.

The protein localises to the membrane. Its function is as follows. Probable aminotransferase. This is Tryptophan aminotransferase-related protein 4 (TAR4) from Arabidopsis thaliana (Mouse-ear cress).